Reading from the N-terminus, the 252-residue chain is Ditrans,polycis-undecaprenyl-diphosphate synthase ((2E,6E)-farnesyl-diphosphate specific) (252 aa).

Residue Asp-24 is part of the active site. Asp-24 is a binding site for Mg(2+). Residues 25–28 (GNGR), Trp-29, Arg-37, His-41, and 69–71 (SSE) each bind substrate. Asn-72 serves as the catalytic Proton acceptor. The substrate site is built by Trp-73, Arg-75, and Arg-192. Mg(2+) is bound at residue His-197. Position 198–200 (198–200 (RIS)) interacts with substrate. Glu-211 is a binding site for Mg(2+).

This sequence belongs to the UPP synthase family. In terms of assembly, homodimer. It depends on Mg(2+) as a cofactor.

It carries out the reaction 8 isopentenyl diphosphate + (2E,6E)-farnesyl diphosphate = di-trans,octa-cis-undecaprenyl diphosphate + 8 diphosphate. Its function is as follows. Catalyzes the sequential condensation of isopentenyl diphosphate (IPP) with (2E,6E)-farnesyl diphosphate (E,E-FPP) to yield (2Z,6Z,10Z,14Z,18Z,22Z,26Z,30Z,34E,38E)-undecaprenyl diphosphate (di-trans,octa-cis-UPP). UPP is the precursor of glycosyl carrier lipid in the biosynthesis of bacterial cell wall polysaccharide components such as peptidoglycan and lipopolysaccharide. This is Ditrans,polycis-undecaprenyl-diphosphate synthase ((2E,6E)-farnesyl-diphosphate specific) from Yersinia pestis.